The primary structure comprises 490 residues: GTPase Der (490 aa).

2 consecutive EngA-type G domains span residues 3–166 (PVVA…MEDL) and 203–376 (IKLA…DSST). GTP is bound by residues 9–16 (GRPNVGKS), 56–60 (DTGGI), 118–121 (NKTD), 209–216 (GRPNVGKS), 256–260 (DTAGV), and 321–324 (NKWD). The KH-like domain occupies 377–461 (RRVGTSMLTR…PIRIQFKEGE (85 aa)).

The protein belongs to the TRAFAC class TrmE-Era-EngA-EngB-Septin-like GTPase superfamily. EngA (Der) GTPase family. Associates with the 50S ribosomal subunit.

In terms of biological role, GTPase that plays an essential role in the late steps of ribosome biogenesis. This Shigella flexneri serotype 5b (strain 8401) protein is GTPase Der.